A 241-amino-acid chain; its full sequence is 3-deoxy-D-manno-octulosonic acid kinase (241 aa).

Aspartate 171 is a catalytic residue.

Belongs to the protein kinase superfamily. KdkA/RfaP family.

The protein resides in the cell inner membrane. It carries out the reaction an alpha-Kdo-(2-&gt;6)-lipid IVA + ATP = a 4-O-phospho-alpha-Kdo-(2-&gt;6)-lipid IVA + ADP + H(+). Its pathway is bacterial outer membrane biogenesis; LPS core biosynthesis. In terms of biological role, catalyzes the ATP-dependent phosphorylation of the 3-deoxy-D-manno-octulosonic acid (Kdo) residue in Kdo-lipid IV(A) at the 4-OH position. This Haemophilus influenzae (strain PittGG) protein is 3-deoxy-D-manno-octulosonic acid kinase.